Consider the following 395-residue polypeptide: Protein HIGH CHLOROPHYLL FLUORESCENCE PHENOTYPE 244, chloroplastic (395 aa).

A chloroplast-targeting transit peptide spans 1–64 (MASLRLPAQL…ERSIVVPVTC (64 aa)).

Belongs to the NmrA-type oxidoreductase family. As to quaternary structure, component of a high molecular weight complex containing OHP1, OHP2 and HCF244, and PSII core proteins D1/D2, HCF136 and HCF173. Interacts with OHP1. Forms a trimeric complex with OHP1 and OHP2 that mutually stabilizes each subunit.

It is found in the plastid. The protein resides in the chloroplast stroma. The protein localises to the chloroplast thylakoid membrane. In terms of biological role, auxiliary factor required, together with HCF173, for the biogenesis of photosystem II (PSII), especially for the synthesis of the reaction center proteins (e.g. D1), via the regulation of the corresponding mRNA (e.g. psbA) translation initiation (ribosomal loading) and stabilization. Forms a trimeric complex with OHP1 and OHP2 that is required to promote PSII core subunit assembly. The trimeric complex forms a transient PSII reaction center-like complex with PsbA, PsbD, PsbE, PsbF and PsbI subunits in thylakoids for early assembly of PSII as well as PSII repair. The trimeric complex is required for the recruitment of ribosomes to the psbA mRNA during PSII biogenesis and repair. This Arabidopsis thaliana (Mouse-ear cress) protein is Protein HIGH CHLOROPHYLL FLUORESCENCE PHENOTYPE 244, chloroplastic.